Reading from the N-terminus, the 340-residue chain is Protein S-acyltransferase 10 (340 aa).

2 helical membrane-spanning segments follow: residues 34 to 54 and 66 to 86; these read LLLKLALVALHLVFIGFLFLF and PWYMGCYILLFSATLLQYFVT. The 51-residue stretch at 162–212 folds into the DHHC domain; it reads LTCGYCHVEQPPRTKHCHDCDRCVLQFDHHCVWLGTCIGQKNHSKFWWYIC. Cys192 serves as the catalytic S-palmitoyl cysteine intermediate. 2 consecutive transmembrane segments (helical) span residues 207–227 and 241–261; these read FWWYICEETTLCIWTLIMYVD and IIILLLVILAISLIFVLLLLI.

Belongs to the DHHC palmitoyltransferase family. Expressed in mature embryos, embryo sacs, cotyledons, whole seedlings, hydathodes, guard cells, sites of lateral root initiation, root tips and phloem, but not in xylem.

Its subcellular location is the vacuole membrane. The enzyme catalyses L-cysteinyl-[protein] + hexadecanoyl-CoA = S-hexadecanoyl-L-cysteinyl-[protein] + CoA. Its function is as follows. S-acyltransferase involved in protein lipid modification. Catalyzes the palmitoylation of proteins peripheral or integral to the tonoplast. Required for the tonoplast localization of CBL2, CBL3 and CBL6, but not for the plasma membrane localization of CBL9, for the endosome localization of RABF1 or for the endomembrane localization of RABF2B. This chain is Protein S-acyltransferase 10 (PAT10), found in Arabidopsis thaliana (Mouse-ear cress).